A 437-amino-acid polypeptide reads, in one-letter code: Trigger factor (437 aa).

In terms of domain architecture, PPIase FKBP-type spans 163–248 (GDRVIIDFEG…LNNVSEPTLP (86 aa)).

This sequence belongs to the FKBP-type PPIase family. Tig subfamily.

Its subcellular location is the cytoplasm. It carries out the reaction [protein]-peptidylproline (omega=180) = [protein]-peptidylproline (omega=0). Involved in protein export. Acts as a chaperone by maintaining the newly synthesized protein in an open conformation. Functions as a peptidyl-prolyl cis-trans isomerase. This is Trigger factor from Neisseria gonorrhoeae (strain NCCP11945).